The primary structure comprises 216 residues: N-(5'-phosphoribosyl)anthranilate isomerase (216 aa).

This sequence belongs to the TrpF family.

The enzyme catalyses N-(5-phospho-beta-D-ribosyl)anthranilate = 1-(2-carboxyphenylamino)-1-deoxy-D-ribulose 5-phosphate. Its pathway is amino-acid biosynthesis; L-tryptophan biosynthesis; L-tryptophan from chorismate: step 3/5. The protein is N-(5'-phosphoribosyl)anthranilate isomerase of Leptospira borgpetersenii serovar Hardjo-bovis (strain JB197).